Consider the following 708-residue polypeptide: Putative adhesion G protein-coupled receptor F2P (708 aa).

Over 1-451 (MGLTAYGNRR…ESLILTYITY (451 aa)) the chain is Extracellular. Asn-21, Asn-220, Asn-252, Asn-260, Asn-305, Asn-313, and Asn-358 each carry an N-linked (GlcNAc...) asparagine glycan. A GAIN-B domain is found at 293–442 (MGTTISGDNI…SILMSPHILE (150 aa)). 2 disulfides stabilise this stretch: Cys-394–Cys-421 and Cys-409–Cys-423. Residues 394–442 (CVGWHSVENRWDQQACKMIQENSQQAVCKCRPSKLFTSFSILMSPHILE) form a GPS region. Residues 452-472 (VGLGISICSLILCLSIEVLVW) form a helical membrane-spanning segment. Residues 473–487 (SQVTKTEITYLRHVC) lie on the Cytoplasmic side of the membrane. Residues 488-508 (IVNIAATLLMADVWFIVASFL) traverse the membrane as a helical segment. The Extracellular segment spans residues 509 to 530 (SGPITHHKGCVAATFFVHFFYL). The helical transmembrane segment at 531 to 551 (SVFFWMLAKALLILYGIMIVF) threads the bilayer. The Cytoplasmic portion of the chain corresponds to 552–557 (HTLPKS). The helical transmembrane segment at 558-578 (VLVASLFSVGYGCPLAIAAIT) threads the bilayer. Residues 579-606 (VAATEPGKGYLRPEICWLNWDMTKALLA) are Extracellular-facing. The helical transmembrane segment at 607 to 627 (FVIPALAIVVVNLITVTLVIV) threads the bilayer. Residues 628 to 650 (KTQRAAIGNSMFQEVRAIVRISK) are Cytoplasmic-facing. A helical transmembrane segment spans residues 651–671 (NIAILTPLLGLTWGFGVATVI). Residues 672–674 (DDR) lie on the Extracellular side of the membrane. Residues 675–695 (SLAFHIIFSLLNAFQVSPDAS) traverse the membrane as a helical segment. The Cytoplasmic portion of the chain corresponds to 696 to 708 (DQVQSERIHEDVL).

The protein belongs to the G-protein coupled receptor 2 family. Adhesion G-protein coupled receptor (ADGR) subfamily. High expression in kidney. Up-regulated in lung adenocarcinomas and prostate cancers.

The protein resides in the membrane. Orphan receptor. The chain is Putative adhesion G protein-coupled receptor F2P from Homo sapiens (Human).